The primary structure comprises 467 residues: Chromosomal replication initiator protein DnaA (467 aa).

Residues 1-90 form a domain I, interacts with DnaA modulators region; it reads MSLSLWQQCL…KPVTQTPQAA (90 aa). The interval 91-130 is domain II; that stretch reads VTSNVAAPALVAQTQPQRAAPSTRSGWDNVPAPAEPTYRS. The domain III, AAA+ region stretch occupies residues 131-347; sequence NVNVKHTFDN…GALNRVIANA (217 aa). ATP contacts are provided by glycine 175, glycine 177, lysine 178, and threonine 179. The domain IV, binds dsDNA stretch occupies residues 348–467; it reads NFTGRAITID…FSNLIRTLSS (120 aa).

This sequence belongs to the DnaA family. Oligomerizes as a right-handed, spiral filament on DNA at oriC.

Its subcellular location is the cytoplasm. In terms of biological role, plays an essential role in the initiation and regulation of chromosomal replication. ATP-DnaA binds to the origin of replication (oriC) to initiate formation of the DNA replication initiation complex once per cell cycle. Binds the DnaA box (a 9 base pair repeat at the origin) and separates the double-stranded (ds)DNA. Forms a right-handed helical filament on oriC DNA; dsDNA binds to the exterior of the filament while single-stranded (ss)DNA is stabiized in the filament's interior. The ATP-DnaA-oriC complex binds and stabilizes one strand of the AT-rich DNA unwinding element (DUE), permitting loading of DNA polymerase. After initiation quickly degrades to an ADP-DnaA complex that is not apt for DNA replication. Binds acidic phospholipids. The sequence is that of Chromosomal replication initiator protein DnaA from Shigella dysenteriae serotype 1 (strain Sd197).